We begin with the raw amino-acid sequence, 212 residues long: 3-isopropylmalate dehydratase small subunit (212 aa).

Belongs to the LeuD family. LeuD type 1 subfamily. Heterodimer of LeuC and LeuD.

The catalysed reaction is (2R,3S)-3-isopropylmalate = (2S)-2-isopropylmalate. Its pathway is amino-acid biosynthesis; L-leucine biosynthesis; L-leucine from 3-methyl-2-oxobutanoate: step 2/4. In terms of biological role, catalyzes the isomerization between 2-isopropylmalate and 3-isopropylmalate, via the formation of 2-isopropylmaleate. This chain is 3-isopropylmalate dehydratase small subunit, found in Methylococcus capsulatus (strain ATCC 33009 / NCIMB 11132 / Bath).